Here is a 529-residue protein sequence, read N- to C-terminus: MQQPRPVRRALLSVSDKAGIVDFARALSTRGVELLSTGGTARLLAEAGLPVTEVSDYTGFPEMMDGRVKTLHPKVHGGILGRRGQDDDIMAQHAISPIDMVVVNLYPFAQTVAREGCTLEDAVENIDIGGPTMVRSAAKNHKDVAIVVKSSDYTAIIDELDANNGSLTFDTRFDLAIKAFEHTAAYDSMIANYFGSLVPAYHGETTAPAGRFPRTLNLNFIKKQDMRYGENSHQQAAFYIEEEIKEASVATARQVQGKALSYNNIADTDAALECVKEFSEPACVIVKHANPCGVAVSSSILDAYDRAYKTDPTSAFGGIIAFNRELDAETAQAIVSRQFVEVIIAPSASDDALKITAAKQNVRVLVCGEWQSRVPGLDFKRVNGGLLVQDRDLGMVTEADLRVVTKRQPTEQELRDALFCWKVAKFVKSNAIVYARDNMTIGIGAGQMSRVYSAKIAGIKAGDEGLEVKGSAMASDAFFPFRDGIDAAAAVGITCVIQPGGSIRDDEVIAAADEHGIAMIFTDMRHFRH.

One can recognise an MGS-like domain in the interval 1–148 (MQQPRPVRRA…KNHKDVAIVV (148 aa)).

The protein belongs to the PurH family.

It carries out the reaction (6R)-10-formyltetrahydrofolate + 5-amino-1-(5-phospho-beta-D-ribosyl)imidazole-4-carboxamide = 5-formamido-1-(5-phospho-D-ribosyl)imidazole-4-carboxamide + (6S)-5,6,7,8-tetrahydrofolate. It catalyses the reaction IMP + H2O = 5-formamido-1-(5-phospho-D-ribosyl)imidazole-4-carboxamide. Its pathway is purine metabolism; IMP biosynthesis via de novo pathway; 5-formamido-1-(5-phospho-D-ribosyl)imidazole-4-carboxamide from 5-amino-1-(5-phospho-D-ribosyl)imidazole-4-carboxamide (10-formyl THF route): step 1/1. It participates in purine metabolism; IMP biosynthesis via de novo pathway; IMP from 5-formamido-1-(5-phospho-D-ribosyl)imidazole-4-carboxamide: step 1/1. The sequence is that of Bifunctional purine biosynthesis protein PurH from Cronobacter sakazakii (strain ATCC BAA-894) (Enterobacter sakazakii).